We begin with the raw amino-acid sequence, 246 residues long: 2-C-methyl-D-erythritol 4-phosphate cytidylyltransferase (246 aa).

Belongs to the IspD/TarI cytidylyltransferase family. IspD subfamily.

The catalysed reaction is 2-C-methyl-D-erythritol 4-phosphate + CTP + H(+) = 4-CDP-2-C-methyl-D-erythritol + diphosphate. It functions in the pathway isoprenoid biosynthesis; isopentenyl diphosphate biosynthesis via DXP pathway; isopentenyl diphosphate from 1-deoxy-D-xylulose 5-phosphate: step 2/6. Catalyzes the formation of 4-diphosphocytidyl-2-C-methyl-D-erythritol from CTP and 2-C-methyl-D-erythritol 4-phosphate (MEP). The protein is 2-C-methyl-D-erythritol 4-phosphate cytidylyltransferase of Chlorobaculum tepidum (strain ATCC 49652 / DSM 12025 / NBRC 103806 / TLS) (Chlorobium tepidum).